Consider the following 299-residue polypeptide: Protoheme IX farnesyltransferase (299 aa).

Helical transmembrane passes span 29 to 49, 51 to 71, 100 to 120, 123 to 143, 150 to 170, 177 to 197, 223 to 243, 244 to 264, and 275 to 295; these read VVTL…PGAV, LQPL…AAAM, HAAT…YWLV, LTAW…TAYL, NIVI…TAVT, GLLL…ALAI, CIFL…LVGM, SGAL…YKAW, and AMDV…LLLV.

It belongs to the UbiA prenyltransferase family. Protoheme IX farnesyltransferase subfamily.

The protein resides in the cell inner membrane. The enzyme catalyses heme b + (2E,6E)-farnesyl diphosphate + H2O = Fe(II)-heme o + diphosphate. It functions in the pathway porphyrin-containing compound metabolism; heme O biosynthesis; heme O from protoheme: step 1/1. Converts heme B (protoheme IX) to heme O by substitution of the vinyl group on carbon 2 of heme B porphyrin ring with a hydroxyethyl farnesyl side group. The chain is Protoheme IX farnesyltransferase from Shewanella amazonensis (strain ATCC BAA-1098 / SB2B).